A 486-amino-acid chain; its full sequence is Protein nucleotidyltransferase YdiU (486 aa).

8 residues coordinate ATP: G90, G92, R93, K113, D125, G126, R176, and R183. Residue D252 is the Proton acceptor of the active site. Positions 253 and 262 each coordinate Mg(2+). An ATP-binding site is contributed by D262.

It belongs to the SELO family. Mg(2+) serves as cofactor. Mn(2+) is required as a cofactor.

It catalyses the reaction L-seryl-[protein] + ATP = 3-O-(5'-adenylyl)-L-seryl-[protein] + diphosphate. It carries out the reaction L-threonyl-[protein] + ATP = 3-O-(5'-adenylyl)-L-threonyl-[protein] + diphosphate. The enzyme catalyses L-tyrosyl-[protein] + ATP = O-(5'-adenylyl)-L-tyrosyl-[protein] + diphosphate. The catalysed reaction is L-histidyl-[protein] + UTP = N(tele)-(5'-uridylyl)-L-histidyl-[protein] + diphosphate. It catalyses the reaction L-seryl-[protein] + UTP = O-(5'-uridylyl)-L-seryl-[protein] + diphosphate. It carries out the reaction L-tyrosyl-[protein] + UTP = O-(5'-uridylyl)-L-tyrosyl-[protein] + diphosphate. In terms of biological role, nucleotidyltransferase involved in the post-translational modification of proteins. It can catalyze the addition of adenosine monophosphate (AMP) or uridine monophosphate (UMP) to a protein, resulting in modifications known as AMPylation and UMPylation. This is Protein nucleotidyltransferase YdiU from Pseudomonas putida (strain GB-1).